The primary structure comprises 213 residues: MKAYQREFIEFALEKEVLKFGEFTLKSGRKSPYFFNAGLFNTGRDLARLGRFYAAALADSGIEFDVLFGPAYKGIPIATTTAVALADHHDVDTPYCFNRKEAKNHGEGGNLVGSELEGRIMLVDDVITAGTAIRESMEIIQANGADLAGVLVAIDRQEKGKGELSAIQEVERDFGCAIISIVSLTDLVTFLEEKGTDAAHLESVKAYRAQYGI.

Lys26 is a 5-phospho-alpha-D-ribose 1-diphosphate binding site. Orotate is bound at residue Phe34–Phe35. 5-phospho-alpha-D-ribose 1-diphosphate contacts are provided by residues Tyr72–Lys73, Arg99, Lys100, Lys103, His105, and Asp124–Ala132. Residues Thr128 and Arg156 each contribute to the orotate site.

Belongs to the purine/pyrimidine phosphoribosyltransferase family. PyrE subfamily. As to quaternary structure, homodimer. It depends on Mg(2+) as a cofactor.

It catalyses the reaction orotidine 5'-phosphate + diphosphate = orotate + 5-phospho-alpha-D-ribose 1-diphosphate. The protein operates within pyrimidine metabolism; UMP biosynthesis via de novo pathway; UMP from orotate: step 1/2. Catalyzes the transfer of a ribosyl phosphate group from 5-phosphoribose 1-diphosphate to orotate, leading to the formation of orotidine monophosphate (OMP). The chain is Orotate phosphoribosyltransferase from Vibrio atlanticus (strain LGP32) (Vibrio splendidus (strain Mel32)).